The following is a 185-amino-acid chain: Ribosome-recycling factor (185 aa).

The protein belongs to the RRF family.

It is found in the cytoplasm. In terms of biological role, responsible for the release of ribosomes from messenger RNA at the termination of protein biosynthesis. May increase the efficiency of translation by recycling ribosomes from one round of translation to another. The protein is Ribosome-recycling factor of Neorickettsia sennetsu (strain ATCC VR-367 / Miyayama) (Ehrlichia sennetsu).